The following is a 40-amino-acid chain: Photosystem II reaction center protein J (40 aa).

A helical membrane pass occupies residues 8–28 (IPLWIIGTGAGILVIGLIGIF).

The protein belongs to the PsbJ family. In terms of assembly, PSII is composed of 1 copy each of membrane proteins PsbA, PsbB, PsbC, PsbD, PsbE, PsbF, PsbH, PsbI, PsbJ, PsbK, PsbL, PsbM, PsbT, PsbX, PsbY, PsbZ, Psb30/Ycf12, at least 3 peripheral proteins of the oxygen-evolving complex and a large number of cofactors. It forms dimeric complexes.

The protein resides in the plastid. Its subcellular location is the chloroplast thylakoid membrane. Its function is as follows. One of the components of the core complex of photosystem II (PSII). PSII is a light-driven water:plastoquinone oxidoreductase that uses light energy to abstract electrons from H(2)O, generating O(2) and a proton gradient subsequently used for ATP formation. It consists of a core antenna complex that captures photons, and an electron transfer chain that converts photonic excitation into a charge separation. This chain is Photosystem II reaction center protein J, found in Aethionema grandiflorum (Persian stone-cress).